Here is a 331-residue protein sequence, read N- to C-terminus: UPF0194 membrane protein YbhG (331 aa).

Residues 1 to 15 form the signal peptide; it reads MKKPVVIGLAVVVLA. Positions 107 to 208 form a coiled coil; sequence EEIAQAAAAV…LNLQDSTLIA (102 aa).

It belongs to the UPF0194 family.

Its subcellular location is the periplasm. The protein is UPF0194 membrane protein YbhG of Escherichia coli O139:H28 (strain E24377A / ETEC).